Reading from the N-terminus, the 468-residue chain is MGARDVIYAMEKWFPEVERPKKHVPLKEKFVWTGLALVLYYVLAEIPVYGIPKKIQDYFQFLRVVLAGRNGSILTLGIGPIVTAGIILQLLVGSELIRLDLANPEDRRFYQALQRVFSVFMCFFEAAIWVLGGAFGRVGVDVTYTIATLMIIQLALGGIILIVLDELVSKWGIGSGISLFIAAGVSQRILTRSLNPLTDPNIIDPLTGKPAIVGAIPYFIQHILDGDLKGALYRGGSAPDMIAVTATIIVFLVVVYFESMRVEIPLGYRGVTIRGRYPIKFLYVSNIPIILTFALYANIQLWARVLDRFGHPWLGRFDPVTGNPIGGFVLYVIPPRNIFTVIDNPVRAIIYLILTIIFSLLFGFLWVELTGLDARTIARQLQRAGLQIPGFRRDPRTLERVLQKYIPYVTFWGSLTVALISVLADFLGALGTGTGILLTVGILYRFYEEIAREQITEMFPALRRLFKG.

Over 1–20 (MGARDVIYAMEKWFPEVERP) the chain is Cytoplasmic. Residues 21 to 47 (KKHVPLKEKFVWTGLALVLYYVLAEIP) form a helical membrane-spanning segment. The Extracellular segment spans residues 48-58 (VYGIPKKIQDY). Positions 59-66 (FQFLRVVL) form an intramembrane region, helical. A discontinuously helical membrane pass occupies residues 59–87 (FQFLRVVLAGRNGSILTLGIGPIVTAGII). Residues 67–78 (AGRNGSILTLGI) lie within the membrane without spanning it. The helical intramembrane region spans 79-87 (GPIVTAGII). At 88–108 (LQLLVGSELIRLDLANPEDRR) the chain is on the cytoplasmic side. Residues 109–133 (FYQALQRVFSVFMCFFEAAIWVLGG) form a helical membrane-spanning segment. Residues 134–144 (AFGRVGVDVTY) lie on the Extracellular side of the membrane. A helical transmembrane segment spans residues 145 to 169 (TIATLMIIQLALGGIILIVLDELVS). Residues 170–175 (KWGIGS) lie on the Cytoplasmic side of the membrane. A helical membrane pass occupies residues 176–194 (GISLFIAAGVSQRILTRSL). Residues 195-239 (NPLTDPNIIDPLTGKPAIVGAIPYFIQHILDGDLKGALYRGGSAP) lie on the Extracellular side of the membrane. Residues 240–261 (DMIAVTATIIVFLVVVYFESMR) form a helical membrane-spanning segment. Topologically, residues 262–285 (VEIPLGYRGVTIRGRYPIKFLYVS) are cytoplasmic. A helical membrane pass occupies residues 286–307 (NIPIILTFALYANIQLWARVLD). Residues 308–346 (RFGHPWLGRFDPVTGNPIGGFVLYVIPPRNIFTVIDNPV) lie on the Extracellular side of the membrane. A helical transmembrane segment spans residues 347–366 (RAIIYLILTIIFSLLFGFLW). The Cytoplasmic segment spans residues 367–409 (VELTGLDARTIARQLQRAGLQIPGFRRDPRTLERVLQKYIPYV). The chain crosses the membrane as a helical span at residues 410–428 (TFWGSLTVALISVLADFLG). At 429–431 (ALG) the chain is on the extracellular side. A helical membrane pass occupies residues 432 to 446 (TGTGILLTVGILYRF). At 447 to 468 (YEEIAREQITEMFPALRRLFKG) the chain is on the cytoplasmic side.

Belongs to the SecY/SEC61-alpha family. In terms of assembly, component of the Sec protein translocase complex. Heterotrimer consisting of alpha (SecY), beta (SecG) and gamma (SecE) subunits. The heterotrimers can form oligomers, although 1 heterotrimer is thought to be able to translocate proteins. Interacts with the ribosome. May interact with SecDF, and other proteins may be involved.

It localises to the cell membrane. In terms of biological role, the central subunit of the protein translocation channel SecYEG. Consists of two halves formed by TMs 1-5 and 6-10. These two domains form a lateral gate at the front which open onto the bilayer between TMs 2 and 7, and are clamped together by SecE at the back. The channel is closed by both a pore ring composed of hydrophobic SecY resides and a short helix (helix 2A) on the extracellular side of the membrane which forms a plug. The plug probably moves laterally to allow the channel to open. The ring and the pore may move independently. In Pyrococcus horikoshii (strain ATCC 700860 / DSM 12428 / JCM 9974 / NBRC 100139 / OT-3), this protein is Protein translocase subunit SecY.